We begin with the raw amino-acid sequence, 129 residues long: NADH-quinone oxidoreductase subunit A (129 aa).

Transmembrane regions (helical) follow at residues 14–34 (LAIHVALSAGIVAAIIVVAAW), 67–87 (FLIAALFVIFDMEAAILFAWA), and 95–115 (WLGLIEAAVFIGVLLLALVYL).

It belongs to the complex I subunit 3 family. As to quaternary structure, NDH-1 is composed of 14 different subunits. Subunits NuoA, H, J, K, L, M, N constitute the membrane sector of the complex.

It localises to the cell inner membrane. It catalyses the reaction a quinone + NADH + 5 H(+)(in) = a quinol + NAD(+) + 4 H(+)(out). Functionally, NDH-1 shuttles electrons from NADH, via FMN and iron-sulfur (Fe-S) centers, to quinones in the respiratory chain. The immediate electron acceptor for the enzyme in this species is believed to be ubiquinone. Couples the redox reaction to proton translocation (for every two electrons transferred, four hydrogen ions are translocated across the cytoplasmic membrane), and thus conserves the redox energy in a proton gradient. The polypeptide is NADH-quinone oxidoreductase subunit A (Rhodopseudomonas palustris (strain ATCC BAA-98 / CGA009)).